The primary structure comprises 514 residues: ATP synthase subunit alpha (514 aa).

Residue 170–177 participates in ATP binding; that stretch reads GDRQIGKT.

Belongs to the ATPase alpha/beta chains family. As to quaternary structure, F-type ATPases have 2 components, CF(1) - the catalytic core - and CF(0) - the membrane proton channel. CF(1) has five subunits: alpha(3), beta(3), gamma(1), delta(1), epsilon(1). CF(0) has three main subunits: a(1), b(2) and c(9-12). The alpha and beta chains form an alternating ring which encloses part of the gamma chain. CF(1) is attached to CF(0) by a central stalk formed by the gamma and epsilon chains, while a peripheral stalk is formed by the delta and b chains.

It localises to the cell inner membrane. It carries out the reaction ATP + H2O + 4 H(+)(in) = ADP + phosphate + 5 H(+)(out). Functionally, produces ATP from ADP in the presence of a proton gradient across the membrane. The alpha chain is a regulatory subunit. The protein is ATP synthase subunit alpha of Pseudomonas fluorescens (strain ATCC BAA-477 / NRRL B-23932 / Pf-5).